The chain runs to 412 residues: UPF0754 membrane protein MAE_37850 (412 aa).

Helical transmembrane passes span 3 to 23 and 387 to 407; these read LPTLWTWILPPIAGAIIGYFT and IVNLGGILGLLVGLMQTIILI.

It belongs to the UPF0754 family.

Its subcellular location is the cell inner membrane. The polypeptide is UPF0754 membrane protein MAE_37850 (Microcystis aeruginosa (strain NIES-843 / IAM M-2473)).